Here is an 863-residue protein sequence, read N- to C-terminus: Envelope glycoprotein gp160 (863 aa).

The first 31 residues, 1-31, serve as a signal peptide directing secretion; sequence MRVMGIRMNYQHLWKWGIMLLGILMTCSVAE. Over 32 to 691 the chain is Extracellular; that stretch reads DLWVTVYYGV…ITKWLWYIKI (660 aa). A disulfide bridge links cysteine 53 with cysteine 73. Residues asparagine 87, asparagine 129, asparagine 136, asparagine 142, asparagine 143, asparagine 159, asparagine 163, asparagine 194, asparagine 199, asparagine 209, asparagine 246, asparagine 274, asparagine 288, asparagine 301, and asparagine 307 are each glycosylated (N-linked (GlcNAc...) asparagine; by host). Intrachain disulfides connect cysteine 118–cysteine 217, cysteine 125–cysteine 208, cysteine 130–cysteine 160, cysteine 230–cysteine 259, and cysteine 240–cysteine 251. Residues 130–159 form a V1 region; that stretch reads CTNAGGNKTTNGNNTTNQEEQMMEKGEMKN. The tract at residues 160-208 is V2; it reads CSFNITTVISDKKKQVHALFYRLDVVPIDDDNSANTSNTNYTNYRLINC. The V3 stretch occupies residues 308–341; sequence CTRPDNKITRQSTPIGLGQALYTTRIKGDIRQAY. Residues cysteine 308 and cysteine 342 are joined by a disulfide bond. N-linked (GlcNAc...) asparagine; by host glycosylation is found at asparagine 343, asparagine 350, and asparagine 365. Residues 374–384 form a CD4-binding loop region; it reads PAGGDPEITTH. Intrachain disulfides connect cysteine 388-cysteine 452 and cysteine 395-cysteine 425. A V4 region spans residues 395-425; sequence CNTSRLFNSTWNSSTWNNDTLNSEGTIKLPC. Residues asparagine 396, asparagine 402, asparagine 406, asparagine 412, asparagine 455, asparagine 468, asparagine 469, and asparagine 472 are each glycosylated (N-linked (GlcNAc...) asparagine; by host). V5 stretches follow at residues 467-478 and 470-478; these read VNNSTNETFRPG and STNETFRPG. Residues 519 to 539 are fusion peptide; it reads AIGLGAVFLGFLGAAGSTMGA. The immunosuppression stretch occupies residues 581-599; sequence KQLQARVLAVESYLKDQQL. An intrachain disulfide couples cysteine 605 to cysteine 611. N-linked (GlcNAc...) asparagine; by host glycosylation is found at asparagine 618, asparagine 623, asparagine 632, and asparagine 644. A coiled-coil region spans residues 640–674; it reads REIDNYTGVIYSLIENSQIQQEKNEQDLLQLDKWA. Positions 669–690 are MPER; binding to GalCer; the sequence is QLDKWASLWNWFSITKWLWYIK. The helical transmembrane segment at 692–712 threads the bilayer; it reads FIMIVGGLIGLRIVFTVLSLV. Topologically, residues 713–863 are cytoplasmic; sequence NRVRQGYSPL…VRQGLERALL (151 aa). The YXXL motif; contains endocytosis signal motif lies at 719–722; it reads YSPL. Positions 729 to 748 are disordered; sequence PAPRGPDRPEGIEEEGGEQG. Cysteine 771 carries S-palmitoyl cysteine; by host lipidation. A Di-leucine internalization motif motif is present at residues 862-863; sequence LL.

This sequence belongs to the HIV-1 env protein family. In terms of assembly, the mature envelope protein (Env) consists of a homotrimer of non-covalently associated gp120-gp41 heterodimers. The resulting complex protrudes from the virus surface as a spike. There seems to be as few as 10 spikes on the average virion. Interacts with host CD4, CCR5 and CXCR4. Gp120 also interacts with the C-type lectins CD209/DC-SIGN and CLEC4M/DC-SIGNR (collectively referred to as DC-SIGN(R)). Gp120 and gp41 interact with GalCer. Gp120 interacts with host ITGA4/ITGB7 complex; on CD4+ T-cells, this interaction results in rapid activation of integrin ITGAL/LFA-1, which facilitates efficient cell-to-cell spreading of HIV-1. Gp120 interacts with cell-associated heparan sulfate; this interaction increases virus infectivity on permissive cells and may be involved in infection of CD4- cells. The mature envelope protein (Env) consists of a homotrimer of non-covalently associated gp120-gp41 heterodimers. The resulting complex protrudes from the virus surface as a spike. There seems to be as few as 10 spikes on the average virion. Post-translationally, highly glycosylated by host. The high number of glycan on the protein is reffered to as 'glycan shield' because it contributes to hide protein sequence from adaptive immune system. In terms of processing, palmitoylation of the transmembrane protein and of Env polyprotein (prior to its proteolytic cleavage) is essential for their association with host cell membrane lipid rafts. Palmitoylation is therefore required for envelope trafficking to classical lipid rafts, but not for viral replication. Specific enzymatic cleavages in vivo yield mature proteins. Envelope glycoproteins are synthesized as an inactive precursor that is heavily N-glycosylated and processed likely by host cell furin in the Golgi to yield the mature SU and TM proteins. The cleavage site between SU and TM requires the minimal sequence [KR]-X-[KR]-R. About 2 of the 9 disulfide bonds of gp41 are reduced by P4HB/PDI, following binding to CD4 receptor.

It is found in the virion membrane. Its subcellular location is the host cell membrane. The protein localises to the host endosome membrane. Its function is as follows. Oligomerizes in the host endoplasmic reticulum into predominantly trimers. In a second time, gp160 transits in the host Golgi, where glycosylation is completed. The precursor is then proteolytically cleaved in the trans-Golgi and thereby activated by cellular furin or furin-like proteases to produce gp120 and gp41. In terms of biological role, attaches the virus to the host lymphoid cell by binding to the primary receptor CD4. This interaction induces a structural rearrangement creating a high affinity binding site for a chemokine coreceptor like CXCR4 and/or CCR5. Acts as a ligand for CD209/DC-SIGN and CLEC4M/DC-SIGNR, which are respectively found on dendritic cells (DCs), and on endothelial cells of liver sinusoids and lymph node sinuses. These interactions allow capture of viral particles at mucosal surfaces by these cells and subsequent transmission to permissive cells. HIV subverts the migration properties of dendritic cells to gain access to CD4+ T-cells in lymph nodes. Virus transmission to permissive T-cells occurs either in trans (without DCs infection, through viral capture and transmission), or in cis (following DCs productive infection, through the usual CD4-gp120 interaction), thereby inducing a robust infection. In trans infection, bound virions remain infectious over days and it is proposed that they are not degraded, but protected in non-lysosomal acidic organelles within the DCs close to the cell membrane thus contributing to the viral infectious potential during DCs' migration from the periphery to the lymphoid tissues. On arrival at lymphoid tissues, intact virions recycle back to DCs' cell surface allowing virus transmission to CD4+ T-cells. Acts as a class I viral fusion protein. Under the current model, the protein has at least 3 conformational states: pre-fusion native state, pre-hairpin intermediate state, and post-fusion hairpin state. During fusion of viral and target intracellular membranes, the coiled coil regions (heptad repeats) assume a trimer-of-hairpins structure, positioning the fusion peptide in close proximity to the C-terminal region of the ectodomain. The formation of this structure appears to drive apposition and subsequent fusion of viral and target cell membranes. Complete fusion occurs in host cell endosomes and is dynamin-dependent, however some lipid transfer might occur at the plasma membrane. The virus undergoes clathrin-dependent internalization long before endosomal fusion, thus minimizing the surface exposure of conserved viral epitopes during fusion and reducing the efficacy of inhibitors targeting these epitopes. Membranes fusion leads to delivery of the nucleocapsid into the cytoplasm. The protein is Envelope glycoprotein gp160 of Human immunodeficiency virus type 1 group M subtype D (isolate Z84) (HIV-1).